Reading from the N-terminus, the 241-residue chain is Ribose-5-phosphate isomerase A (241 aa).

Substrate is bound by residues 28–31 (TGST), 83–86 (DGAD), and 96–99 (KGGG). The active-site Proton acceptor is glutamate 105. Lysine 123 is a binding site for substrate.

Belongs to the ribose 5-phosphate isomerase family. As to quaternary structure, homodimer.

The enzyme catalyses aldehydo-D-ribose 5-phosphate = D-ribulose 5-phosphate. The protein operates within carbohydrate degradation; pentose phosphate pathway; D-ribose 5-phosphate from D-ribulose 5-phosphate (non-oxidative stage): step 1/1. Its function is as follows. Catalyzes the reversible conversion of ribose-5-phosphate to ribulose 5-phosphate. This Rhodopseudomonas palustris (strain BisA53) protein is Ribose-5-phosphate isomerase A.